The primary structure comprises 406 residues: Formate-dependent phosphoribosylglycinamide formyltransferase (406 aa).

N(1)-(5-phospho-beta-D-ribosyl)glycinamide-binding positions include 28–29 and Glu-88; that span reads EL. Residues Arg-121, Lys-162, 167–172, 202–205, and Glu-210 each bind ATP; these read SSGKGQ and EGFI. The ATP-grasp domain maps to 126-320; that stretch reads RLAAEELGCA…EFELHAKAIL (195 aa). Mg(2+) is bound by residues Glu-279 and Glu-291. Residues Asp-298, Lys-367, and 374–375 contribute to the N(1)-(5-phospho-beta-D-ribosyl)glycinamide site; that span reads RR.

Belongs to the PurK/PurT family. In terms of assembly, homodimer.

It carries out the reaction N(1)-(5-phospho-beta-D-ribosyl)glycinamide + formate + ATP = N(2)-formyl-N(1)-(5-phospho-beta-D-ribosyl)glycinamide + ADP + phosphate + H(+). The protein operates within purine metabolism; IMP biosynthesis via de novo pathway; N(2)-formyl-N(1)-(5-phospho-D-ribosyl)glycinamide from N(1)-(5-phospho-D-ribosyl)glycinamide (formate route): step 1/1. Involved in the de novo purine biosynthesis. Catalyzes the transfer of formate to 5-phospho-ribosyl-glycinamide (GAR), producing 5-phospho-ribosyl-N-formylglycinamide (FGAR). Formate is provided by PurU via hydrolysis of 10-formyl-tetrahydrofolate. The polypeptide is Formate-dependent phosphoribosylglycinamide formyltransferase (Janthinobacterium sp. (strain Marseille) (Minibacterium massiliensis)).